Consider the following 371-residue polypeptide: Histidinol-phosphate aminotransferase (371 aa).

Lysine 228 is subject to N6-(pyridoxal phosphate)lysine.

This sequence belongs to the class-II pyridoxal-phosphate-dependent aminotransferase family. Histidinol-phosphate aminotransferase subfamily. Pyridoxal 5'-phosphate is required as a cofactor.

The catalysed reaction is L-histidinol phosphate + 2-oxoglutarate = 3-(imidazol-4-yl)-2-oxopropyl phosphate + L-glutamate. It participates in amino-acid biosynthesis; L-histidine biosynthesis; L-histidine from 5-phospho-alpha-D-ribose 1-diphosphate: step 7/9. In Methanococcus maripaludis (strain C7 / ATCC BAA-1331), this protein is Histidinol-phosphate aminotransferase.